The following is a 388-amino-acid chain: Glycoprotein-N-acetylgalactosamine 3-beta-galactosyltransferase 1 (388 aa).

The Cytoplasmic portion of the chain corresponds to 1–12 (MAPISHYIGKTS). Residues 13 to 30 (LTTLAIGIAIGITVSNIV) traverse the membrane as a helical; Signal-anchor for type II membrane protein segment. The Lumenal segment spans residues 31–388 (KFSSTQRRHF…LAQTDSKHIS (358 aa)). The interval 43 to 65 (SGYIPDSPHSHGENDFVEGPDDS) is disordered. N-linked (GlcNAc...) asparagine glycosylation is present at asparagine 80. A disulfide bridge connects residues cysteine 95 and cysteine 119. Methionine 98, asparagine 100, glutamate 142, glycine 143, arginine 144, lysine 150, and aspartate 173 together coordinate UDP. Residues aspartate 173 and aspartate 175 each coordinate Mn(2+). Cysteine 238 and cysteine 253 are joined by a disulfide. Tryptophan 292 contacts a glycoprotein. Cysteine 307 and cysteine 308 are oxidised to a cystine. Residues histidine 316 and tyrosine 317 each coordinate UDP. A Mn(2+)-binding site is contributed by histidine 316. The disordered stretch occupies residues 344–388 (STEEQDHGSSHKDTDAMKPEGKGMEDKEDEETNISLAQTDSKHIS). Basic and acidic residues predominate over residues 347–368 (EQDHGSSHKDTDAMKPEGKGME). N-linked (GlcNAc...) asparagine glycosylation is present at asparagine 376.

Belongs to the glycosyltransferase 31 family. Beta3-Gal-T subfamily. In terms of assembly, homodimer; disulfide-linked. Requires Mn(2+) as cofactor.

Its subcellular location is the membrane. The enzyme catalyses an N-acetyl-alpha-D-galactosaminyl derivative + UDP-alpha-D-galactose = a beta-D-galactosyl-(1-&gt;3)-N-acetyl-alpha-D-galactosaminyl derivative + UDP + H(+). The protein operates within protein modification; protein glycosylation. Glycosyltransferase that generates the core 1 O-glycan Gal-beta1-3GalNAc-alpha1-Ser/Thr (T antigen), which is a precursor for many extended O-glycans in glycoproteins. The polypeptide is Glycoprotein-N-acetylgalactosamine 3-beta-galactosyltransferase 1 (Biomphalaria glabrata (Bloodfluke planorb)).